Reading from the N-terminus, the 504-residue chain is 2,3-bisphosphoglycerate-independent phosphoglycerate mutase (504 aa).

Asp9 and Ser59 together coordinate Mn(2+). Ser59 serves as the catalytic Phosphoserine intermediate. Substrate-binding positions include His120, 149-150 (RD), Arg181, Arg187, 253-256 (RPDR), and Lys326. 5 residues coordinate Mn(2+): Asp393, His397, Asp434, His435, and His451.

This sequence belongs to the BPG-independent phosphoglycerate mutase family. Mn(2+) is required as a cofactor.

It catalyses the reaction (2R)-2-phosphoglycerate = (2R)-3-phosphoglycerate. Its pathway is carbohydrate degradation; glycolysis; pyruvate from D-glyceraldehyde 3-phosphate: step 3/5. Functionally, catalyzes the interconversion of 2-phosphoglycerate and 3-phosphoglycerate. This chain is 2,3-bisphosphoglycerate-independent phosphoglycerate mutase, found in Haloquadratum walsbyi (strain DSM 16790 / HBSQ001).